The primary structure comprises 93 residues: MKKTLMLLAMVVALVILPFFINHGGEYGGSDGEAESQIQAIAPHYKPWFQPLYEPASGEIESLLFTLQGSLGAAVIFYILGYCKGKQRRDDRA.

Helical transmembrane passes span L5–G25 and L63–C83.

It belongs to the CbiN family. In terms of assembly, forms an energy-coupling factor (ECF) transporter complex composed of an ATP-binding protein (A component, CbiO), a transmembrane protein (T component, CbiQ) and 2 possible substrate-capture proteins (S components, CbiM and CbiN) of unknown stoichimetry.

The protein localises to the cell inner membrane. It participates in cofactor biosynthesis; adenosylcobalamin biosynthesis. Its function is as follows. Part of the energy-coupling factor (ECF) transporter complex CbiMNOQ involved in cobalt import. This Salmonella arizonae (strain ATCC BAA-731 / CDC346-86 / RSK2980) protein is Cobalt transport protein CbiN.